We begin with the raw amino-acid sequence, 81 residues long: uncharacterized protein (81 aa).

This is an uncharacterized protein from Bacillus subtilis (strain 168).